A 455-amino-acid chain; its full sequence is UDP-N-acetylmuramoylalanine--D-glutamate ligase (455 aa).

118 to 124 serves as a coordination point for ATP; the sequence is GSNAKST.

It belongs to the MurCDEF family.

It is found in the cytoplasm. It catalyses the reaction UDP-N-acetyl-alpha-D-muramoyl-L-alanine + D-glutamate + ATP = UDP-N-acetyl-alpha-D-muramoyl-L-alanyl-D-glutamate + ADP + phosphate + H(+). It participates in cell wall biogenesis; peptidoglycan biosynthesis. Cell wall formation. Catalyzes the addition of glutamate to the nucleotide precursor UDP-N-acetylmuramoyl-L-alanine (UMA). This is UDP-N-acetylmuramoylalanine--D-glutamate ligase from Chromohalobacter salexigens (strain ATCC BAA-138 / DSM 3043 / CIP 106854 / NCIMB 13768 / 1H11).